The chain runs to 330 residues: Carbonic anhydrase 1 (330 aa).

Positions 1-109 are chloroplast transit peptide-like; it reads MSTASAFAIN…AAARIDQITA (109 aa).

This sequence belongs to the beta-class carbonic anhydrase family. Homohexamer.

The protein resides in the cytoplasm. The catalysed reaction is hydrogencarbonate + H(+) = CO2 + H2O. In terms of biological role, reversible hydration of carbon dioxide. The polypeptide is Carbonic anhydrase 1 (Flaveria linearis (Narrowleaf yellowtops)).